The sequence spans 226 residues: Putative O-methyltransferase Mvan_4497 (226 aa).

S-adenosyl-L-methionine-binding positions include valine 53, glutamate 75, 77 to 78 (GT), serine 83, aspartate 101, and valine 102. Aspartate 149 provides a ligand contact to substrate.

This sequence belongs to the class I-like SAM-binding methyltransferase superfamily. Cation-dependent O-methyltransferase family.

The chain is Putative O-methyltransferase Mvan_4497 from Mycolicibacterium vanbaalenii (strain DSM 7251 / JCM 13017 / BCRC 16820 / KCTC 9966 / NRRL B-24157 / PYR-1) (Mycobacterium vanbaalenii).